The sequence spans 705 residues: Polyribonucleotide nucleotidyltransferase (705 aa).

Mg(2+) is bound by residues D487 and D493. The KH domain occupies 554-613 (PKILTMTINPDKIRDVIGPSGKQINKIIEETGVKIDIEQDGTIFISSTDESGNQKAKKII). One can recognise an S1 motif domain in the interval 623-691 (GQLYLGKVKR…KQGRVNLSRK (69 aa)).

It belongs to the polyribonucleotide nucleotidyltransferase family. In terms of assembly, homodimer. Component of a possible RNA degradosome complex composed of rny, rnjA, rnjB, pnp, pfkA and eno (although rnjA and rnjB's presence is unclear). RNA helicase CshA may also be a member of this complex. Requires Mg(2+) as cofactor.

It is found in the cytoplasm. It carries out the reaction RNA(n+1) + phosphate = RNA(n) + a ribonucleoside 5'-diphosphate. In terms of biological role, involved in mRNA degradation. Catalyzes the phosphorolysis of single-stranded polyribonucleotides processively in the 3'- to 5'-direction. Necessary for competence development in Bacillus subtilis. May be necessary for modification of the srfA transcript (stabilization or translation activation). Involved in processing precursor type I toxin-antitoxin RNAs antitoxin SR4 and SR5 RNAs to their mature forms. This Bacillus subtilis (strain 168) protein is Polyribonucleotide nucleotidyltransferase.